The primary structure comprises 189 residues: MVKMIVGLGNPGSKYQQTKHNVGFMAVDRLVKDLDISFTEDKTFKALVGSTFINQEKIYFVKPTTFMNNSGLVVRALLTYYNISTKDLMVIYDDLDMAVGKIRLRQKGSAGGHNGIKSIIAHIGTQEFDRVKIGIGRPSHGMSVINHVLGKFDTDDMITINIALDKVDKAINYYLQEKSIEKTMQQFNG.

Tyr-15 lines the tRNA pocket. The active-site Proton acceptor is the His-20. Positions 66, 68, and 114 each coordinate tRNA.

The protein belongs to the PTH family. In terms of assembly, monomer.

The protein localises to the cytoplasm. It catalyses the reaction an N-acyl-L-alpha-aminoacyl-tRNA + H2O = an N-acyl-L-amino acid + a tRNA + H(+). Its function is as follows. Hydrolyzes ribosome-free peptidyl-tRNAs (with 1 or more amino acids incorporated), which drop off the ribosome during protein synthesis, or as a result of ribosome stalling. Catalyzes the release of premature peptidyl moieties from peptidyl-tRNA molecules trapped in stalled 50S ribosomal subunits, and thus maintains levels of free tRNAs and 50S ribosomes. The chain is Peptidyl-tRNA hydrolase from Streptococcus equi subsp. zooepidemicus (strain H70).